The sequence spans 95 residues: Protein TusB (95 aa).

This sequence belongs to the DsrH/TusB family. Heterohexamer, formed by a dimer of trimers. The hexameric TusBCD complex contains 2 copies each of TusB, TusC and TusD. The TusBCD complex interacts with TusE.

Its subcellular location is the cytoplasm. In terms of biological role, part of a sulfur-relay system required for 2-thiolation of 5-methylaminomethyl-2-thiouridine (mnm(5)s(2)U) at tRNA wobble positions. The chain is Protein TusB from Enterobacter sp. (strain 638).